A 96-amino-acid chain; its full sequence is Prokineticin Bv8-like peptide 2 (96 aa).

An N-terminal signal peptide occupies residues 1-19; that stretch reads MKCFAQIVVLLLVIAFSHG. Disulfide bonds link cysteine 26–cysteine 38, cysteine 32–cysteine 50, cysteine 37–cysteine 78, cysteine 60–cysteine 86, and cysteine 80–cysteine 95.

Belongs to the AVIT (prokineticin) family. Expressed by the skin glands.

The protein resides in the secreted. Functionally, potent agonist for both PKR1/PROKR1 and PKR2/PROKR2, and inducer of a potent and long-lasting hyperalgesia. Also potentiates capsaicin-induced TRPV1 current when tested on DRG neurons. At subnanomolar concentrations, this protein both induces potent chemotaxis of macrophages and stimulates LPS-induced production of the pro-inflammatory cytokines IL-1 and IL-12. In vivo, potently stimulates the contraction of the guinea-pig gastrointestinal (GI) smooth muscle (nanomolar concentration) and rabbit aortic rings. The chain is Prokineticin Bv8-like peptide 2 from Bombina maxima (Giant fire-bellied toad).